We begin with the raw amino-acid sequence, 175 residues long: Calcineurin subunit B (175 aa).

EF-hand domains are found at residues 21-56 (DEIE…SANP), 60-88 (RIME…FSGR), 90-125 (SKDE…MVGS), and 131-166 (QLQQ…TEVA). Ca(2+)-binding residues include Asp34, Asp36, Ser38, Ser40, Glu45, Asp66, Asp68, Ser70, Asp72, Glu77, Asp103, Asp105, Asp107, Glu114, Asp144, Asp146, Asp148, Gln150, and Glu155.

It belongs to the calcineurin regulatory subunit family. As to quaternary structure, composed of a catalytic subunit (A) and a regulatory subunit (B).

In terms of biological role, regulatory subunit of calcineurin, a calcium-dependent, calmodulin stimulated protein phosphatase. Confers calcium sensitivity. This chain is Calcineurin subunit B (CNB1), found in Candida glabrata (strain ATCC 2001 / BCRC 20586 / JCM 3761 / NBRC 0622 / NRRL Y-65 / CBS 138) (Yeast).